The sequence spans 289 residues: Phospholipase C (289 aa).

An N-terminal signal peptide occupies residues 1-25 (MKFKKVVLGMCLIASVLVFPVTIKA). The propeptide occupies 26-51 (NACCDEYLQTPAAPHDIDSKLPHKLS). The Zn(2+) site is built by Trp-52, His-65, Asp-106, His-120, His-169, Asp-173, His-179, His-193, and Glu-197. One can recognise a Zn-dependent PLC domain in the interval 52 to 289 (WSADNPTNTD…LEFWSKKTNE (238 aa)).

This sequence belongs to the bacterial zinc-metallophospholipase C family. In terms of assembly, forms monomers, dimers and higher order oligomers, but only the monomer is enzymatically active. Zn(2+) serves as cofactor.

The protein localises to the secreted. It catalyses the reaction a 1,2-diacyl-sn-glycero-3-phosphocholine + H2O = phosphocholine + a 1,2-diacyl-sn-glycerol + H(+). The catalysed reaction is 1,2-dihexadecanoyl-sn-glycero-3-phosphocholine + H2O = 1,2-dihexadecanoyl-sn-glycerol + phosphocholine + H(+). It carries out the reaction 1-hexadecanoyl-2-(9Z-octadecenoyl)-sn-glycero-3-phosphocholine + H2O = 1-hexadecanoyl-2-(9Z-octadecenoyl)-sn-glycerol + phosphocholine + H(+). The enzyme catalyses 1,2-di-(9Z-octadecenoyl)-sn-glycero-3-phosphocholine + H2O = 1,2-di-(9Z-octadecenoyl)-sn-glycerol + phosphocholine + H(+). It catalyses the reaction a 1,2-diacyl-sn-glycero-3-phosphoethanolamine + H2O = phosphoethanolamine + a 1,2-diacyl-sn-glycerol + H(+). The catalysed reaction is 1,2-di-(9Z-octadecenoyl)-sn-glycero-3-phosphoethanolamine + H2O = phosphoethanolamine + 1,2-di-(9Z-octadecenoyl)-sn-glycerol + H(+). It carries out the reaction 1,2-dihexadecanoyl-sn-glycero-3-phosphoethanolamine + H2O = 1,2-dihexadecanoyl-sn-glycerol + phosphoethanolamine + H(+). The enzyme catalyses a 1,2-diacyl-sn-glycero-3-phospho-L-serine + H2O = O-phospho-L-serine + a 1,2-diacyl-sn-glycerol + H(+). It catalyses the reaction a 1,2-diacyl-sn-glycero-3-phosphoglycerol + H2O = glycerol 1-phosphate + a 1,2-diacyl-sn-glycerol + H(+). The catalysed reaction is a 1,2-diacyl-sn-glycero-3-phospho-(1D-myo-inositol) + H2O = 1D-myo-inositol 1-phosphate + a 1,2-diacyl-sn-glycerol + H(+). It carries out the reaction a sphingomyelin + H2O = phosphocholine + an N-acylsphing-4-enine + H(+). The enzyme catalyses a 1-O-(1Z-alkenyl)-2-acyl-sn-glycero-3-phosphoethanolamine + H2O = a 1-O-(1Z-alkenyl)-2-acyl-sn-glycerol + phosphoethanolamine + H(+). Enzymatic activity of LmPC-PLC can be specifically inhibited by its propeptide added in trans. The tendency of the enzyme to oligomerize, which appears to largely attenuate the enzymatic activity, may be one of the mechanisms regulating phospholipase activity in the host cell during the different steps of the infection cycle of L.monocytogenes. Enzyme activity is inhibited by EDTA and o-phenanthroline in vitro. In terms of biological role, major virulence factor whose phospholipase activity facilitates pore formation by the pore-forming toxin listeriolysin O (LLO), leading to vacuolar membrane disruption and vacuolar escape of L.monocytogenes, which enables the bacterium to spread in the host. Acts as a phospholipase C exhibiting broad substrate specificity, with the highest activities towards diacylglycerophospholipids with phosphocholine, phosphoserine, and phosphoethanolamine head groups, but less towards phosphoglycerol or phosphoinositol head groups. Is also able to hydrolyze sphingomyelin and plasmenylethanolamine. The chain is Phospholipase C from Listeria monocytogenes serovar 1/2a (strain ATCC BAA-679 / EGD-e).